Consider the following 1025-residue polypeptide: DNA polymerase (1025 aa).

The protein belongs to the DNA polymerase type-B family.

The catalysed reaction is DNA(n) + a 2'-deoxyribonucleoside 5'-triphosphate = DNA(n+1) + diphosphate. Its function is as follows. Replicates the viral genome. Host DNA polymerases cannot substitute for the viral enzyme in this process. In Noctuidae (owlet moths), this protein is DNA polymerase.